Consider the following 228-residue polypeptide: Uridylate kinase (228 aa).

Residue 9 to 10 (GS) participates in ATP binding. A UMP-binding site is contributed by G44. G45 and R49 together coordinate ATP. UMP-binding positions include D66 and 114–120 (IVAAQTT). ATP contacts are provided by T140, Y146, and D149.

The protein belongs to the UMP kinase family. Homohexamer.

The protein localises to the cytoplasm. The enzyme catalyses UMP + ATP = UDP + ADP. Its pathway is pyrimidine metabolism; CTP biosynthesis via de novo pathway; UDP from UMP (UMPK route): step 1/1. Its activity is regulated as follows. Inhibited by UTP. Its function is as follows. Catalyzes the reversible phosphorylation of UMP to UDP. This chain is Uridylate kinase, found in Haloarcula marismortui (strain ATCC 43049 / DSM 3752 / JCM 8966 / VKM B-1809) (Halobacterium marismortui).